The primary structure comprises 842 residues: ATP-binding cassette sub-family B member 6 (842 aa).

Over Met1 to Cys26 the chain is Lumenal. Residues Met1–Trp205 form a required for the lysosomal targeting region. The tract at residues Met1 to Thr236 is required for ATPase activity. Cys8 and Cys26 form a disulfide bridge. A helical membrane pass occupies residues Phe27 to Val47. The Cytoplasmic portion of the chain corresponds to Leu48 to Pro72. A helical transmembrane segment spans residues Tyr73 to Gly93. Topologically, residues Arg94–Tyr106 are lumenal. The helical transmembrane segment at Leu107–Ala127 threads the bilayer. The Cytoplasmic segment spans residues Glu128–Ser147. The chain crosses the membrane as a helical span at residues Ser148 to Trp168. Topologically, residues Asn169 to Gln185 are lumenal. The helical transmembrane segment at Phe186–Ala206 threads the bilayer. The Cytoplasmic portion of the chain corresponds to Pro207–Phe263. A helical membrane pass occupies residues Ile264–Ile284. The 292-residue stretch at Val265–Thr556 folds into the ABC transmembrane type-1 domain. The Lumenal portion of the chain corresponds to Phe285–Thr305. Residues Val306–Val326 form a helical membrane-spanning segment. Residues Ser327–Arg375 are Cytoplasmic-facing. The chain crosses the membrane as a helical span at residues Gly376–Ala396. Residue Asp397 is a topological domain, lumenal. Residues Ile398 to Phe418 form a helical membrane-spanning segment. Over Leu419–Gln499 the chain is Cytoplasmic. Residues Thr500–Val520 form a helical membrane-spanning segment. Residues Ser521–Asp529 lie on the Lumenal side of the membrane. The chain crosses the membrane as a helical span at residues Phe530–Tyr550. Residues Tyr551–Ala842 lie on the Cytoplasmic side of the membrane. Positions Ile590 to Leu824 constitute an ABC transporter domain. Gly623 to Ser630 lines the ATP pocket.

Belongs to the ABC transporter superfamily. ABCB family. Heavy Metal importer (TC 3.A.1.210) subfamily. In terms of assembly, homodimer. In terms of processing, N-glycosylated. Highly expressed in the liver, adrenal glands, and testis.

It is found in the cell membrane. It localises to the mitochondrion outer membrane. The protein resides in the endoplasmic reticulum membrane. The protein localises to the golgi apparatus membrane. Its subcellular location is the endosome membrane. It is found in the lysosome membrane. It localises to the late endosome membrane. The protein resides in the early endosome membrane. The protein localises to the secreted. Its subcellular location is the extracellular exosome. It is found in the mitochondrion. It localises to the endosome. The protein resides in the multivesicular body membrane. The protein localises to the melanosome membrane. The catalysed reaction is heme b(in) + ATP + H2O = heme b(out) + ADP + phosphate + H(+). It carries out the reaction coproporphyrin III(in) + ATP + H2O = coproporphyrin III(out) + ADP + phosphate + H(+). The enzyme catalyses pheophorbide a(in) + ATP + H2O = pheophorbide a(out) + ADP + phosphate + H(+). It catalyses the reaction coproporphyrinogen III(in) + ATP + H2O = coproporphyrinogen III(out) + ADP + phosphate + H(+). The catalysed reaction is protoporphyrin IX(in) + ATP + H2O = protoporphyrin IX(out) + ADP + phosphate + H(+). It carries out the reaction coproporphyrin I(in) + ATP + H2O = coproporphyrin I(out) + ADP + phosphate + H(+). The enzyme catalyses uroporphyrin I(in) + ATP + H2O = uroporphyrin I(out) + ADP + phosphate + H(+). It catalyses the reaction uroporphyrin III(in) + ATP + H2O = uroporphyrin III(out) + ADP + phosphate + H(+). ATP-dependent transporter that catalyzes the transport of a broad-spectrum of porphyrins from the cytoplasm to the extracellular space through the plasma membrane or into the vesicle lumen. May also function as an ATP-dependent importer of porphyrins from the cytoplasm into the mitochondria, in turn may participate in the de novo heme biosynthesis regulation and in the coordination of heme and iron homeostasis during phenylhydrazine stress. May also play a key role in the early steps of melanogenesis producing PMEL amyloid fibrils. In vitro, it confers to cells a resistance to toxic metal such as arsenic and cadmium and against chemotherapeutics agent such as 5-fluorouracil, SN-38 and vincristin. In addition may play a role in the transition metal homeostasis. This is ATP-binding cassette sub-family B member 6 from Mesocricetus auratus (Golden hamster).